The following is a 466-amino-acid chain: Putative chitinase (466 aa).

An N-terminal signal peptide occupies residues 1-17 (MYLTIWLVSILALGTWG). Positions 20-380 (FNRFCHYNSW…MAVIHGLNAY (361 aa)) constitute a GH18 domain. An intrachain disulfide couples Cys-24 to Cys-49. Glu-141 serves as the catalytic Proton donor. Positions 408 to 442 (NYRRRNQQEKVAEMEQRIRHLEQELQQSMGNMAYE) form a coiled coil.

The protein belongs to the glycosyl hydrolase 18 family. Prismatic layer of shell (at protein level). Expressed primarily in the mantle with highest level in the mantle edge and lower level in the mantle pallium.

It is found in the secreted. It carries out the reaction Random endo-hydrolysis of N-acetyl-beta-D-glucosaminide (1-&gt;4)-beta-linkages in chitin and chitodextrins.. The polypeptide is Putative chitinase (Pinctada maxima (Silver-lipped pearl oyster)).